The following is a 148-amino-acid chain: Cytochrome c oxidase subunit 6, mitochondrial (148 aa).

The N-terminal 40 residues, 1–40 (MLSRAIFRNPVINRTLLRARPGAYHATRLTKNTFIQSRKY), are a transit peptide targeting the mitochondrion.

The protein belongs to the cytochrome c oxidase subunit 5A family. In terms of assembly, component of the cytochrome c oxidase (complex IV, CIV), a multisubunit enzyme composed of 12 subunits. The complex is composed of a catalytic core of 3 subunits COX1, COX2 and COX3, encoded in the mitochondrial DNA, and 9 supernumerary subunits COX4, COX5A (or COX5B), COX6, COX7, COX8, COX9, COX12, COX13 and COX26, which are encoded in the nuclear genome. The complex exists as a monomer or a dimer and forms supercomplexes (SCs) in the inner mitochondrial membrane with a dimer of ubiquinol-cytochrome c oxidoreductase (cytochrome b-c1 complex, complex III, CIII), resulting in 2 different assemblies (supercomplexes III(2)IV and III(2)IV(2)). COX26 interacts with COX1, COX2, COX6 and COX9.

The protein localises to the mitochondrion inner membrane. It participates in energy metabolism; oxidative phosphorylation. Its function is as follows. Component of the cytochrome c oxidase, the last enzyme in the mitochondrial electron transport chain which drives oxidative phosphorylation. The respiratory chain contains 3 multisubunit complexes succinate dehydrogenase (complex II, CII), ubiquinol-cytochrome c oxidoreductase (cytochrome b-c1 complex, complex III, CIII) and cytochrome c oxidase (complex IV, CIV), that cooperate to transfer electrons derived from NADH and succinate to molecular oxygen, creating an electrochemical gradient over the inner membrane that drives transmembrane transport and the ATP synthase. Cytochrome c oxidase is the component of the respiratory chain that catalyzes the reduction of oxygen to water. Electrons originating from reduced cytochrome c in the intermembrane space (IMS) are transferred via the dinuclear copper A center (CU(A)) of COX2 and heme A of COX1 to the active site in COX1, a binuclear center (BNC) formed by heme A3 and copper B (CU(B)). The BNC reduces molecular oxygen to 2 water molecules using 4 electrons from cytochrome c in the IMS and 4 protons from the mitochondrial matrix. COX6 may stabilize the region of CIV at the interface with CIII, supporting a role in formation or stability of the CIII(2)IV(2) SC. The sequence is that of Cytochrome c oxidase subunit 6, mitochondrial (COX6) from Saccharomyces cerevisiae (strain ATCC 204508 / S288c) (Baker's yeast).